A 379-amino-acid chain; its full sequence is Sulfate adenylyltransferase (379 aa).

It belongs to the sulfate adenylyltransferase family.

It carries out the reaction sulfate + ATP + H(+) = adenosine 5'-phosphosulfate + diphosphate. The protein operates within sulfur metabolism; hydrogen sulfide biosynthesis; sulfite from sulfate: step 1/3. This chain is Sulfate adenylyltransferase, found in Thermococcus onnurineus (strain NA1).